The following is a 428-amino-acid chain: Histidinol dehydrogenase (428 aa).

Tyr126, Gln188, and Asn211 together coordinate NAD(+). The substrate site is built by Ser234, Gln256, and His259. Zn(2+) is bound by residues Gln256 and His259. Residues Glu324 and His325 each act as proton acceptor in the active site. His325, Asp358, Glu412, and His417 together coordinate substrate. A Zn(2+)-binding site is contributed by Asp358. His417 provides a ligand contact to Zn(2+).

Belongs to the histidinol dehydrogenase family. Zn(2+) is required as a cofactor.

It catalyses the reaction L-histidinol + 2 NAD(+) + H2O = L-histidine + 2 NADH + 3 H(+). Its pathway is amino-acid biosynthesis; L-histidine biosynthesis; L-histidine from 5-phospho-alpha-D-ribose 1-diphosphate: step 9/9. In terms of biological role, catalyzes the sequential NAD-dependent oxidations of L-histidinol to L-histidinaldehyde and then to L-histidine. The protein is Histidinol dehydrogenase of Chlorobaculum tepidum (strain ATCC 49652 / DSM 12025 / NBRC 103806 / TLS) (Chlorobium tepidum).